We begin with the raw amino-acid sequence, 331 residues long: MSQWHHVGGHWGQDRVFSGYSSAKKKGGNHIPERWKDYLPVGQRMPGTRFIAFKVPLKKSFEKHLAPEECFSPLDLFNKIQEQNEELGLIIDLTYTRRYYKPEELPENFPYLKIYTVGHQVPDDDTIFKFKNAVNGFLRENKDNDRLIGVHCTHGVNRTGYLICRYLIDVEGMRPDDAIELFSRCRGHCLERQNYIDDLRNGPIRKNWDSSVSRTRGFEDSTHMMEPVFTATKPVNRRPKHNIHQTQGYPEPRHFHTWTQDLQQSERKFSQNWNIYQRCHVPPPGPPGEDYFQRRYSWNVKPSAGQGGPNKRFSPGSYYRVPYSAYYRWTK.

The 148-residue stretch at 61-208 (FEKHLAPEEC…LRNGPIRKNW (148 aa)) folds into the Tyrosine-protein phosphatase domain. The active-site Phosphocysteine intermediate is the Cys152. 153–158 (THGVNR) is a binding site for substrate. The active-site Proton donor/acceptor is Arg158.

The protein belongs to the protein-tyrosine phosphatase family. Non-receptor class dual specificity subfamily. As to quaternary structure, monomer. May interact with SFRS7 and SFRS9/SRP30C.

It localises to the nucleus. The protein localises to the nucleus speckle. Functionally, possesses RNA 5'-triphosphatase and diphosphatase activities, but displays a poor protein-tyrosine phosphatase activity. In addition, has phosphatase activity with ATP, ADP and O-methylfluorescein phosphate (in vitro). Binds to RNA. May participate in nuclear mRNA metabolism. The chain is RNA/RNP complex-1-interacting phosphatase (DUSP11) from Bos taurus (Bovine).